Here is a 238-residue protein sequence, read N- to C-terminus: 1-(5-phosphoribosyl)-5-[(5-phosphoribosylamino)methylideneamino] imidazole-4-carboxamide isomerase (238 aa).

The active-site Proton acceptor is the aspartate 8. Aspartate 130 serves as the catalytic Proton donor.

Belongs to the HisA/HisF family.

The protein localises to the cytoplasm. The catalysed reaction is 1-(5-phospho-beta-D-ribosyl)-5-[(5-phospho-beta-D-ribosylamino)methylideneamino]imidazole-4-carboxamide = 5-[(5-phospho-1-deoxy-D-ribulos-1-ylimino)methylamino]-1-(5-phospho-beta-D-ribosyl)imidazole-4-carboxamide. It functions in the pathway amino-acid biosynthesis; L-histidine biosynthesis; L-histidine from 5-phospho-alpha-D-ribose 1-diphosphate: step 4/9. The protein is 1-(5-phosphoribosyl)-5-[(5-phosphoribosylamino)methylideneamino] imidazole-4-carboxamide isomerase of Methanococcus maripaludis (strain C7 / ATCC BAA-1331).